Here is a 1107-residue protein sequence, read N- to C-terminus: Rho GTPase-activating protein 39 (1107 aa).

The segment at 1–21 is disordered; sequence MSQAQDYECRSHHVDEQEPRI. An N-acetylserine modification is found at Ser2. Residues 7–19 show a composition bias toward basic and acidic residues; that stretch reads YECRSHHVDEQEP. 2 WW domains span residues 25–58 and 63–97; these read STRL…PPAG and RTSE…RPQN. The segment covering 111–122 has biased composition (polar residues); sequence QNTESPRASADN. Disordered stretches follow at residues 111-173, 218-267, 282-311, and 326-370; these read QNTE…PPGV, PSFL…PERR, SPLL…LYEE, and MDVQ…LMRT. Residues 123–136 show a composition bias toward low complexity; the sequence is SPGRGSRDGSTGSS. Residues 242-254 show a composition bias toward polar residues; sequence SGSQHSPNLQTFV. Residue Ser282 is modified to Phosphoserine. Polar residues-rich tracts occupy residues 331-343 and 353-369; these read EANS…SPQR and LQTT…QLMR. 4 positions are modified to phosphoserine: Ser380, Ser384, Ser402, and Ser403. Disordered regions lie at residues 404–429, 441–529, and 563–585; these read PKLR…QPSP, SGDY…RASL, and MKQR…GAVP. The span at 470-484 shows a compositional bias: polar residues; it reads SWSSQQDTMSSTGYS. A phosphoserine mark is found at Ser597, Ser683, Ser708, and Ser719. The region spanning 715–867 is the MyTH4 domain; it reads WSSESIKKPM…PYVEEPDGVA (153 aa). The Rho-GAP domain maps to 914 to 1102; that stretch reads SALQEVMSMQ…VLIQHLDTSF (189 aa).

The protein resides in the nucleus. This is Rho GTPase-activating protein 39 (Arhgap39) from Mus musculus (Mouse).